The chain runs to 337 residues: GTPase Obg (337 aa).

In terms of domain architecture, Obg spans 1 to 159 (MDFIDEVKLY…RNIVLKLKVL (159 aa)). The region spanning 160 to 329 (SDVGIIGMPN…LNEKVKTKEI (170 aa)) is the OBG-type G domain. GTP contacts are provided by residues 166 to 173 (GMPNVGKS), 191 to 195 (FTTIR), 212 to 215 (DIPG), 279 to 282 (NKCD), and 310 to 312 (DDD). The Mg(2+) site is built by Ser-173 and Thr-193.

This sequence belongs to the TRAFAC class OBG-HflX-like GTPase superfamily. OBG GTPase family. In terms of assembly, monomer. It depends on Mg(2+) as a cofactor.

It localises to the cytoplasm. Functionally, an essential GTPase which binds GTP, GDP and possibly (p)ppGpp with moderate affinity, with high nucleotide exchange rates and a fairly low GTP hydrolysis rate. Plays a role in control of the cell cycle, stress response, ribosome biogenesis and in those bacteria that undergo differentiation, in morphogenesis control. This chain is GTPase Obg, found in Wolbachia pipientis subsp. Culex pipiens (strain wPip).